Here is a 385-residue protein sequence, read N- to C-terminus: S-adenosylmethionine synthase (385 aa).

An ATP-binding site is contributed by His-16. Asp-18 lines the Mg(2+) pocket. Glu-44 provides a ligand contact to K(+). Glu-57 and Gln-100 together coordinate L-methionine. The flexible loop stretch occupies residues 100-110 (QSPDINQGVDR). Residues 164-166 (DGK), 230-231 (KF), Asp-239, 245-246 (RK), Ala-262, and Lys-266 each bind ATP. Position 239 (Asp-239) interacts with L-methionine. Position 270 (Lys-270) interacts with L-methionine.

This sequence belongs to the AdoMet synthase family. In terms of assembly, homotetramer; dimer of dimers. Mg(2+) serves as cofactor. K(+) is required as a cofactor.

The protein localises to the cytoplasm. It catalyses the reaction L-methionine + ATP + H2O = S-adenosyl-L-methionine + phosphate + diphosphate. It participates in amino-acid biosynthesis; S-adenosyl-L-methionine biosynthesis; S-adenosyl-L-methionine from L-methionine: step 1/1. In terms of biological role, catalyzes the formation of S-adenosylmethionine (AdoMet) from methionine and ATP. The overall synthetic reaction is composed of two sequential steps, AdoMet formation and the subsequent tripolyphosphate hydrolysis which occurs prior to release of AdoMet from the enzyme. The sequence is that of S-adenosylmethionine synthase from Helicobacter pylori (strain P12).